The primary structure comprises 278 residues: Ferredoxin--NADP reductase A (278 aa).

The region spanning 3 to 103 (PGYTEETVLE…KRATGTLTIG (101 aa)) is the FAD-binding FR-type domain. Residues 52 to 55 (RAYS) and Thr-118 each bind FAD.

The protein belongs to the ferredoxin--NADP reductase type 1 family. FAD is required as a cofactor.

It carries out the reaction 2 reduced [4Fe-4S]-[ferredoxin] + NADP(+) + H(+) = 2 oxidized [4Fe-4S]-[ferredoxin] + NADPH. Functionally, transports electrons between NADPH and ferredoxin. Can transfer electrons to ferredoxins Fdx2 and Fdx8. Prefers NADPH to NADH. The polypeptide is Ferredoxin--NADP reductase A (Sorangium cellulosum (strain So ce56) (Polyangium cellulosum (strain So ce56))).